The chain runs to 157 residues: Endoribonuclease YbeY (157 aa).

Residues histidine 114, histidine 118, and histidine 124 each contribute to the Zn(2+) site.

This sequence belongs to the endoribonuclease YbeY family. The cofactor is Zn(2+).

The protein resides in the cytoplasm. In terms of biological role, single strand-specific metallo-endoribonuclease involved in late-stage 70S ribosome quality control and in maturation of the 3' terminus of the 16S rRNA. This chain is Endoribonuclease YbeY, found in Serratia proteamaculans (strain 568).